Reading from the N-terminus, the 40-residue chain is Photosystem II reaction center protein X (40 aa).

Residues 10–30 (FFYSILFGAIVLGLLGGGFIF) form a helical membrane-spanning segment.

This sequence belongs to the PsbX family. Type 1 subfamily. PSII is composed of 1 copy each of membrane proteins PsbA, PsbB, PsbC, PsbD, PsbE, PsbF, PsbH, PsbI, PsbJ, PsbK, PsbL, PsbM, PsbT, PsbX, PsbY, PsbZ, Psb30/Ycf12, peripheral proteins PsbO, CyanoQ (PsbQ), PsbU, PsbV and a large number of cofactors. It forms dimeric complexes.

The protein resides in the cellular thylakoid membrane. Involved in the binding and/or turnover of quinones at the Q(B) site of photosystem II (PSII). PSII is a light-driven water plastoquinone oxidoreductase, using light energy to abstract electrons from H(2)O, generating a proton gradient subsequently used for ATP formation. This Acaryochloris marina (strain MBIC 11017) protein is Photosystem II reaction center protein X.